The primary structure comprises 144 residues: Large ribosomal subunit protein uL11 (144 aa).

It belongs to the universal ribosomal protein uL11 family. In terms of assembly, part of the ribosomal stalk of the 50S ribosomal subunit. Interacts with L10 and the large rRNA to form the base of the stalk. L10 forms an elongated spine to which L12 dimers bind in a sequential fashion forming a multimeric L10(L12)X complex. In terms of processing, one or more lysine residues are methylated.

Forms part of the ribosomal stalk which helps the ribosome interact with GTP-bound translation factors. The chain is Large ribosomal subunit protein uL11 from Streptomyces coelicolor (strain ATCC BAA-471 / A3(2) / M145).